Consider the following 428-residue polypeptide: Histidinol dehydrogenase (428 aa).

Residues serine 234, glutamine 256, and histidine 259 each contribute to the substrate site. Zn(2+) contacts are provided by glutamine 256 and histidine 259. Residues glutamate 323 and histidine 324 each act as proton acceptor in the active site. Residues histidine 324, aspartate 357, glutamate 411, and histidine 416 each contribute to the substrate site. Aspartate 357 contributes to the Zn(2+) binding site. Histidine 416 serves as a coordination point for Zn(2+).

It belongs to the histidinol dehydrogenase family. Requires Zn(2+) as cofactor.

It catalyses the reaction L-histidinol + 2 NAD(+) + H2O = L-histidine + 2 NADH + 3 H(+). The protein operates within amino-acid biosynthesis; L-histidine biosynthesis; L-histidine from 5-phospho-alpha-D-ribose 1-diphosphate: step 9/9. Its function is as follows. Catalyzes the sequential NAD-dependent oxidations of L-histidinol to L-histidinaldehyde and then to L-histidine. The chain is Histidinol dehydrogenase from Campylobacter jejuni (strain RM1221).